The chain runs to 145 residues: ATP synthase epsilon chain (145 aa).

The protein belongs to the ATPase epsilon chain family. In terms of assembly, F-type ATPases have 2 components, CF(1) - the catalytic core - and CF(0) - the membrane proton channel. CF(1) has five subunits: alpha(3), beta(3), gamma(1), delta(1), epsilon(1). CF(0) has three main subunits: a, b and c.

The protein localises to the cell inner membrane. Produces ATP from ADP in the presence of a proton gradient across the membrane. The chain is ATP synthase epsilon chain from Francisella tularensis subsp. holarctica (strain FTNF002-00 / FTA).